Consider the following 377-residue polypeptide: tRNA-specific 2-thiouridylase MnmA (377 aa).

Residues 18-25 (AMSGGVDS) and Met-44 each bind ATP. Cys-113 functions as the Nucleophile in the catalytic mechanism. Cys-113 and Cys-210 are oxidised to a cystine. Position 137 (Gly-137) interacts with ATP. Positions 159–161 (RDQ) are interaction with tRNA. Cys-210 acts as the Cysteine persulfide intermediate in catalysis.

This sequence belongs to the MnmA/TRMU family.

The protein localises to the cytoplasm. The catalysed reaction is S-sulfanyl-L-cysteinyl-[protein] + uridine(34) in tRNA + AH2 + ATP = 2-thiouridine(34) in tRNA + L-cysteinyl-[protein] + A + AMP + diphosphate + H(+). Its function is as follows. Catalyzes the 2-thiolation of uridine at the wobble position (U34) of tRNA, leading to the formation of s(2)U34. The chain is tRNA-specific 2-thiouridylase MnmA from Rhodospirillum rubrum (strain ATCC 11170 / ATH 1.1.1 / DSM 467 / LMG 4362 / NCIMB 8255 / S1).